We begin with the raw amino-acid sequence, 434 residues long: Xylose isomerase (434 aa).

Active-site residues include His-100 and Asp-103. Residues Glu-231, Glu-267, His-270, Asp-295, Asp-306, Asp-308, and Asp-338 each contribute to the Mg(2+) site.

The protein belongs to the xylose isomerase family. In terms of assembly, homotetramer. Mg(2+) is required as a cofactor.

Its subcellular location is the cytoplasm. It catalyses the reaction alpha-D-xylose = alpha-D-xylulofuranose. This is Xylose isomerase from Ruegeria pomeroyi (strain ATCC 700808 / DSM 15171 / DSS-3) (Silicibacter pomeroyi).